The following is a 165-amino-acid chain: Lipoprotein signal peptidase (165 aa).

A run of 2 helical transmembrane segments spans residues 64–84 (LGRW…GAWM) and 88–108 (GSRL…GNAV). Active-site residues include Asp-118 and Asp-136. The helical transmembrane segment at 128 to 148 (SWYVFNVADAGIVAGVAGLLV) threads the bilayer.

It belongs to the peptidase A8 family.

Its subcellular location is the cell inner membrane. The enzyme catalyses Release of signal peptides from bacterial membrane prolipoproteins. Hydrolyzes -Xaa-Yaa-Zaa-|-(S,diacylglyceryl)Cys-, in which Xaa is hydrophobic (preferably Leu), and Yaa (Ala or Ser) and Zaa (Gly or Ala) have small, neutral side chains.. It participates in protein modification; lipoprotein biosynthesis (signal peptide cleavage). Functionally, this protein specifically catalyzes the removal of signal peptides from prolipoproteins. This is Lipoprotein signal peptidase from Methylobacterium sp. (strain 4-46).